Here is a 125-residue protein sequence, read N- to C-terminus: Oxytocin-neurophysin 1 (125 aa).

An N-terminal signal peptide occupies residues 1-19 (MAGSSLACCLLGLLALTSA). Cysteines 20 and 25 form a disulfide. Glycine amide is present on Gly-28. Cystine bridges form between Cys-41-Cys-85, Cys-44-Cys-58, Cys-52-Cys-75, Cys-59-Cys-65, Cys-92-Cys-104, Cys-98-Cys-116, and Cys-105-Cys-110.

Belongs to the vasopressin/oxytocin family. Interacts with oxytocin receptor (Ki=1.5 nM). Interacts with vasopressin V1aR/AVPR1A (Ki=37 nM), V1bR/AVPR1B (Ki=222 nM), and V2R/AVPR2 receptors (Ki=823 nM).

The protein resides in the secreted. Its function is as follows. Neurophysin 1 specifically binds oxytocin. Functionally, oxytocin causes contraction of the smooth muscle of the uterus and of the mammary gland. Acts by binding to oxytocin receptor (OXTR). In Bos taurus (Bovine), this protein is Oxytocin-neurophysin 1 (OXT).